Reading from the N-terminus, the 834-residue chain is Ras GTPase-activating protein 3 (834 aa).

C2 domains are found at residues 1–112 and 123–263; these read MAVE…DTWF and VQGK…EAWY. Ala-2 carries the post-translational modification N-acetylalanine. Tyr-66 is subject to Phosphotyrosine. Ser-77 is subject to Phosphoserine. Thr-110 carries the post-translational modification Phosphothreonine. The Ras-GAP domain occupies 346 to 561; it reads GRVVPFISAI…DAVKNFLDLI (216 aa). In terms of domain architecture, PH spans 576 to 677; it reads ILLKEGFMIK…WIDILTKVSQ (102 aa). A Btk-type zinc finger spans residues 679–715; the sequence is NQKRLAVYHPSAYLNGHWLCCRASSDTAAGCSPCTGG. 4 residues coordinate Zn(2+): His-687, Cys-698, Cys-699, and Cys-709. A disordered region spans residues 806–834; sequence KYGSQEHPIGDKSFQSYIRQQSETPAHSM. A phosphoserine mark is found at Ser-809 and Ser-833. The segment covering 818-834 has biased composition (polar residues); it reads SFQSYIRQQSETPAHSM.

Inhibitory regulator of the Ras-cyclic AMP pathway. May bind inositol tetrakisphosphate (IP4). This is Ras GTPase-activating protein 3 (RASA3) from Bos taurus (Bovine).